Here is a 102-residue protein sequence, read N- to C-terminus: Small ribosomal subunit protein uS10 (102 aa).

The protein belongs to the universal ribosomal protein uS10 family. As to quaternary structure, part of the 30S ribosomal subunit.

Its function is as follows. Involved in the binding of tRNA to the ribosomes. The protein is Small ribosomal subunit protein uS10 of Nitrosopumilus maritimus (strain SCM1).